We begin with the raw amino-acid sequence, 277 residues long: Bis(5'-nucleosyl)-tetraphosphatase, symmetrical (277 aa).

The protein belongs to the Ap4A hydrolase family.

The enzyme catalyses P(1),P(4)-bis(5'-adenosyl) tetraphosphate + H2O = 2 ADP + 2 H(+). Its function is as follows. Hydrolyzes diadenosine 5',5'''-P1,P4-tetraphosphate to yield ADP. This Chromobacterium violaceum (strain ATCC 12472 / DSM 30191 / JCM 1249 / CCUG 213 / NBRC 12614 / NCIMB 9131 / NCTC 9757 / MK) protein is Bis(5'-nucleosyl)-tetraphosphatase, symmetrical.